Here is a 290-residue protein sequence, read N- to C-terminus: 4-hydroxybenzoate octaprenyltransferase (290 aa).

8 consecutive transmembrane segments (helical) span residues 23–43 (IGAL…TPGV), 46–66 (LWIL…GCVV), 99–119 (LFVV…TMTI), 141–161 (LPQV…FAAV), 163–183 (ESVP…AVAY), 213–233 (LIIG…GELN), 234–254 (GLGW…VYQQ), and 268–288 (AFMN…MSYW).

It belongs to the UbiA prenyltransferase family. The cofactor is Mg(2+).

The protein localises to the cell inner membrane. It catalyses the reaction all-trans-octaprenyl diphosphate + 4-hydroxybenzoate = 4-hydroxy-3-(all-trans-octaprenyl)benzoate + diphosphate. It functions in the pathway cofactor biosynthesis; ubiquinone biosynthesis. Catalyzes the prenylation of para-hydroxybenzoate (PHB) with an all-trans polyprenyl group. Mediates the second step in the final reaction sequence of ubiquinone-8 (UQ-8) biosynthesis, which is the condensation of the polyisoprenoid side chain with PHB, generating the first membrane-bound Q intermediate 3-octaprenyl-4-hydroxybenzoate. This is 4-hydroxybenzoate octaprenyltransferase from Escherichia coli (strain UTI89 / UPEC).